The chain runs to 71 residues: Augerpeptide-s7a (71 aa).

The signal sequence occupies residues 1–20; it reads MSALKFVLICGLVLLLIETI. Positions 21 to 29 are excised as a propeptide; that stretch reads PGVSLNLMR. 3 cysteine pairs are disulfide-bonded: Cys-36–Cys-48, Cys-42–Cys-65, and Cys-47–Cys-68.

In terms of tissue distribution, expressed by the venom duct.

The protein resides in the secreted. Functionally, elicits an uncoordinated twisting syndrome when injected into C.elegans, but has no effect on mice. This Terebra subulata (Chocolate spotted auger) protein is Augerpeptide-s7a.